A 451-amino-acid polypeptide reads, in one-letter code: uncharacterized protein (451 aa).

A run of 11 helical transmembrane segments spans residues 13-33 (IGFV…WKFP), 41-61 (GGAF…PLLV), 97-117 (ACFL…LYIV), 142-162 (NPVQ…LVVA), 174-194 (AVMM…SLTL), 217-237 (ILFA…VMVT), 255-275 (IVLM…PAVF), 299-319 (LPFG…AALT), 345-365 (WTSG…YGVL), 381-401 (FTVS…FIPL), and 429-449 (LLRF…IGIL).

It belongs to the sodium:neurotransmitter symporter (SNF) (TC 2.A.22) family.

The protein localises to the cell membrane. Putative sodium-dependent transporter. This is an uncharacterized protein from Bacillus subtilis (strain 168).